We begin with the raw amino-acid sequence, 338 residues long: DNA-directed RNA polymerase subunit alpha (338 aa).

The tract at residues Met-1 to Leu-230 is alpha N-terminal domain (alpha-NTD). Positions Phe-247 to Glu-338 are alpha C-terminal domain (alpha-CTD).

This sequence belongs to the RNA polymerase alpha chain family. As to quaternary structure, homodimer. The RNAP catalytic core consists of 2 alpha, 1 beta, 1 beta' and 1 omega subunit. When a sigma factor is associated with the core the holoenzyme is formed, which can initiate transcription.

The enzyme catalyses RNA(n) + a ribonucleoside 5'-triphosphate = RNA(n+1) + diphosphate. Functionally, DNA-dependent RNA polymerase catalyzes the transcription of DNA into RNA using the four ribonucleoside triphosphates as substrates. The chain is DNA-directed RNA polymerase subunit alpha from Campylobacter concisus (strain 13826).